The following is a 320-amino-acid chain: MEKTAVLLVNLGTPSAPEPDAVRPYLAEFLGDWWVIDKPRWQWLPILHGIILRVRPPRVAKIYQKIWLPEGSPLLHYSRLQQAALQQRLEPEGIRVALGMTYGQPSVKSALEELRGWGVRRLLVLPLFPQYSSTTTAAVWSKVQKALDGWRDLPEQIFIRDFPTHPKYLAFLTERISGYIAEKGRPDALVLSYHSIPQAYTASGDDYAAQCESTTDAVRDRFPDLKIVMGYQSKFGNDPWLEPATDEVLRELVRTGHRHVAVMAPGFAADCIETLHELEVEYAEEFVKAGGERYDYLPAANDHPLFIDCLEDLVRRHLPR.

Residues His194 and Glu273 each contribute to the Fe(2+) site.

Belongs to the ferrochelatase family.

It is found in the cytoplasm. It carries out the reaction Fe-coproporphyrin III + 2 H(+) = coproporphyrin III + Fe(2+). The protein operates within porphyrin-containing compound metabolism; protoheme biosynthesis. In terms of biological role, involved in coproporphyrin-dependent heme b biosynthesis. Catalyzes the insertion of ferrous iron into coproporphyrin III to form Fe-coproporphyrin III. The sequence is that of Coproporphyrin III ferrochelatase from Symbiobacterium thermophilum (strain DSM 24528 / JCM 14929 / IAM 14863 / T).